We begin with the raw amino-acid sequence, 454 residues long: Chromosomal replication initiator protein DnaA (454 aa).

Positions 1–83 (MMTDSMRLVW…RPLKVLLEVA (83 aa)) are domain I, interacts with DnaA modulators. A domain II region spans residues 83 to 115 (AECVAEAPETPEEAPQQLCLPAFADIPRPSSGR). Residues 116–333 (LLNRDFTFDS…SGIKGLAARN (218 aa)) form a domain III, AAA+ region region. The ATP site is built by Gly-160, Gly-162, Lys-163, and Ser-164. The segment at 334–454 (SIMGRGIDLK…LCGKIEAGEF (121 aa)) is domain IV, binds dsDNA.

It belongs to the DnaA family. In terms of assembly, oligomerizes as a right-handed, spiral filament on DNA at oriC.

It localises to the cytoplasm. Plays an essential role in the initiation and regulation of chromosomal replication. ATP-DnaA binds to the origin of replication (oriC) to initiate formation of the DNA replication initiation complex once per cell cycle. Binds the DnaA box (a 9 base pair repeat at the origin) and separates the double-stranded (ds)DNA. Forms a right-handed helical filament on oriC DNA; dsDNA binds to the exterior of the filament while single-stranded (ss)DNA is stabiized in the filament's interior. The ATP-DnaA-oriC complex binds and stabilizes one strand of the AT-rich DNA unwinding element (DUE), permitting loading of DNA polymerase. After initiation quickly degrades to an ADP-DnaA complex that is not apt for DNA replication. Binds acidic phospholipids. The polypeptide is Chromosomal replication initiator protein DnaA (Desulfatibacillum aliphaticivorans).